We begin with the raw amino-acid sequence, 481 residues long: Transmembrane protein 39A (481 aa).

A run of 8 helical transmembrane segments spans residues 74–94 (LFET…YINI), 109–129 (STSL…AVML), 150–170 (LCYV…GWVL), 182–202 (SVLK…LCCL), 278–298 (EVLF…LCFV), 313–333 (LIMV…PPHY), 411–431 (LLNV…YSLL), and 437–457 (NHTL…FKLL).

The protein belongs to the TMEM39 family.

It is found in the endoplasmic reticulum membrane. Regulates autophagy by controlling the spatial distribution and levels of the intracellular phosphatidylinositol 4-phosphate (PtdIns(4)P) pools. Modulates (PtdIns(4)P) levels by regulating the ER-to-Golgi trafficking of the phosphatidylinositide phosphatase SACM1L. This chain is Transmembrane protein 39A (tmem39a), found in Danio rerio (Zebrafish).